The sequence spans 334 residues: Cytoskeleton protein RodZ (334 aa).

The Cytoplasmic segment spans residues M1–G111. Residues L19 to L71 form the HTH cro/C1-type domain. The H-T-H motif DNA-binding region spans Q30–E49. Residues W112–W132 form a helical; Signal-anchor for type II membrane protein membrane-spanning segment. The Periplasmic portion of the chain corresponds to W133–Q334. A disordered region spans residues L154–G241. 2 stretches are compositionally biased toward low complexity: residues T176–A211 and T219–G241.

Belongs to the RodZ family.

It localises to the cell inner membrane. Its function is as follows. Cytoskeletal protein that is involved in cell-shape control through regulation of the length of the long axis. This is Cytoskeleton protein RodZ from Salmonella choleraesuis (strain SC-B67).